The chain runs to 159 residues: MDPSQFNPTYIPGSPQMLTEENSRDDSGASQISSETLIKNLSNLTINASSESVSPLSEALLRRESVGAAVLREIEDEWLYSRRGVRTLLSVQREKMARLRYMLLGGVRTHERRPTNKEPKGVKKESRPFKCPCSFCVSNGWDPSENARIGNQDTKPLQP.

Disordered regions lie at residues 1–31 and 140–159; these read MDPS…GASQ and GWDP…PLQP. Polar residues predominate over residues 149-159; the sequence is IGNQDTKPLQP.

Low expression in testis, ovary and thymus. Expressed in embryonic stem and carcinoma cells. Highly expressed in testicular germ cell tumors.

The protein resides in the nucleus. It localises to the cytoplasm. Functionally, primordial germ cell (PGCs)-specific protein involved in epigenetic chromatin reprogramming in the zygote following fertilization. In zygotes, DNA demethylation occurs selectively in the paternal pronucleus before the first cell division, while the adjacent maternal pronucleus and certain paternally-imprinted loci are protected from this process. Participates in protection of DNA methylation in the maternal pronucleus by preventing conversion of 5mC to 5hmC: specifically recognizes and binds histone H3 dimethylated at 'Lys-9' (H3K9me2) on maternal genome, and protects maternal genome from TET3-mediated conversion to 5hmC and subsequent DNA demethylation. Does not bind paternal chromatin, which is mainly packed into protamine and does not contain much H3K9me2 mark. Also protects imprinted loci that are marked with H3K9me2 in mature sperm from DNA demethylation in early embryogenesis. May be important for the totipotent/pluripotent states continuing through preimplantation development. Also involved in chromatin condensation in oocytogenesis. In Homo sapiens (Human), this protein is Developmental pluripotency-associated protein 3 (DPPA3).